Here is a 103-residue protein sequence, read N- to C-terminus: MYAIIETGGKQYKVEEGAVLFIEKLADVEGEVVTFDKVLLVSKDGKVTAGAPTVAGATVTGKVEKHGKAKKIIVYKYKAKKNYRRKQGHRQPFTKVVIEKINA.

Belongs to the bacterial ribosomal protein bL21 family. As to quaternary structure, part of the 50S ribosomal subunit. Contacts protein L20.

This protein binds to 23S rRNA in the presence of protein L20. This is Large ribosomal subunit protein bL21 from Brevibacillus brevis (strain 47 / JCM 6285 / NBRC 100599).